Reading from the N-terminus, the 183-residue chain is MQQFDGTTIVSVRRGERVALGGDGQVTLGNIVIKATARKIRKLHGGKVLAGFAGGTADAFTLIERFEAKLQKHQGNLLVSAVELAKDWRTDRMLRRLEAMLIVADKDHTLIITGNGDVLEPEQGIAAIGSGGAFAQSAARALFENTDLAPEVVVKKSLEIAGDICIYTNHNHLIETLGPDDEA.

Thr7 is an active-site residue. Na(+) is bound by residues Gly162, Cys165, and Thr168.

The protein belongs to the peptidase T1B family. HslV subfamily. In terms of assembly, a double ring-shaped homohexamer of HslV is capped on each side by a ring-shaped HslU homohexamer. The assembly of the HslU/HslV complex is dependent on binding of ATP.

The protein resides in the cytoplasm. The enzyme catalyses ATP-dependent cleavage of peptide bonds with broad specificity.. Its activity is regulated as follows. Allosterically activated by HslU binding. Functionally, protease subunit of a proteasome-like degradation complex believed to be a general protein degrading machinery. The polypeptide is ATP-dependent protease subunit HslV (Chromobacterium violaceum (strain ATCC 12472 / DSM 30191 / JCM 1249 / CCUG 213 / NBRC 12614 / NCIMB 9131 / NCTC 9757 / MK)).